We begin with the raw amino-acid sequence, 446 residues long: MTSVEQSRQLVTEIPGPVSLELAKRLNAAVPRGVGVTLPVFVTRAAGGVIEDVDGNRLIDLGSGIAVTTIGNSSPRVVDAVRAQVADFTHTCFIITPYEEYVAVTEQLNRITPGSGEKRSVLFNSGAEAVENSIKVARSYTRKPAVVAFDHAYHGRTNLTMALTAKSMPYKSGFGPFAPEIYRAPLSYPYRDGLLNKDLATDGKLAGARAINVIEKQVGADDLAAVIIEPIQGEGGFIVPAEGFLATLLDWCRKNNVMFIADEVQTGFARTGAMFACEHDGIVPDLICTAKGIADGLPLAAVTGRAEIMNAPHVSGLGGTFGGNPVACAAALATITTIENDGLIQRAQQIERLITDRLLRLQDADDRIGDVRGRGAMIAVELVKSGTAEPDPELTEKVATAAHATGVIILTCGMFGNIIRLLPPLTISDELLAEGLDILSRILGDF.

Position 291 is an N6-(pyridoxal phosphate)lysine (Lys291).

The protein belongs to the class-III pyridoxal-phosphate-dependent aminotransferase family. Pyridoxal 5'-phosphate is required as a cofactor.

It carries out the reaction 4-aminobutanoate + 2-oxoglutarate = succinate semialdehyde + L-glutamate. The enzyme catalyses (S)-3-amino-2-methylpropanoate + 2-oxoglutarate = 2-methyl-3-oxopropanoate + L-glutamate. It participates in amino-acid degradation; 4-aminobutanoate degradation. In Mycobacterium leprae (strain TN), this protein is 4-aminobutyrate aminotransferase (gabT).